The chain runs to 61 residues: Bacteriocin mesentericin Y105 (61 aa).

A signal peptide spans 1–24 (MTNMKSVEAYQQLDNQNLKKVVGG). An intrachain disulfide couples C33 to C38.

This sequence belongs to the bacteriocin class IIA/YGNGV family.

The protein resides in the secreted. Functionally, bacteriocin active against Listeria monocytogenes. This Leuconostoc mesenteroides protein is Bacteriocin mesentericin Y105 (mesY).